Reading from the N-terminus, the 337-residue chain is Deoxyhypusine hydroxylase (337 aa).

2 HEAT-like PBS-type repeats span residues 73–99 (LKHE…VLSD) and 106–132 (CRHE…YRDR). The Fe cation site is built by H75, E76, H108, and E109. Residues 156-165 (AERQKEKLRP) show a composition bias toward basic and acidic residues. The tract at residues 156–183 (AERQKEKLRPSDFASIDPAPPMPESDKE) is disordered. 3 HEAT-like PBS-type repeats span residues 202-235 (SRYR…GLSD), 240-266 (FRHE…ALSN), and 273-300 (VRHE…FLHD). Fe cation-binding residues include H242, E243, H275, and E276.

The protein belongs to the deoxyhypusine hydroxylase family. Fe(2+) is required as a cofactor.

It is found in the cytoplasm. Its subcellular location is the nucleus. It carries out the reaction [eIF5A protein]-deoxyhypusine + AH2 + O2 = [eIF5A protein]-hypusine + A + H2O. It participates in protein modification; eIF5A hypusination. In terms of biological role, catalyzes the hydroxylation of the N(6)-(4-aminobutyl)-L-lysine intermediate to form hypusine, an essential post-translational modification only found in mature eIF-5A factor. The protein is Deoxyhypusine hydroxylase of Gibberella zeae (strain ATCC MYA-4620 / CBS 123657 / FGSC 9075 / NRRL 31084 / PH-1) (Wheat head blight fungus).